The primary structure comprises 251 residues: Hydroxyacylglutathione hydrolase (251 aa).

7 residues coordinate Zn(2+): His-53, His-55, Asp-57, His-58, His-110, Asp-127, and His-165.

Belongs to the metallo-beta-lactamase superfamily. Glyoxalase II family. As to quaternary structure, monomer. Zn(2+) is required as a cofactor.

It carries out the reaction an S-(2-hydroxyacyl)glutathione + H2O = a 2-hydroxy carboxylate + glutathione + H(+). It functions in the pathway secondary metabolite metabolism; methylglyoxal degradation; (R)-lactate from methylglyoxal: step 2/2. Its function is as follows. Thiolesterase that catalyzes the hydrolysis of S-D-lactoyl-glutathione to form glutathione and D-lactic acid. This is Hydroxyacylglutathione hydrolase from Yersinia enterocolitica serotype O:8 / biotype 1B (strain NCTC 13174 / 8081).